Reading from the N-terminus, the 106-residue chain is UPF0145 protein CLL_A2504 (106 aa).

Belongs to the UPF0145 family.

This is UPF0145 protein CLL_A2504 from Clostridium botulinum (strain Eklund 17B / Type B).